The primary structure comprises 217 residues: 3-oxo-tetronate 4-phosphate decarboxylase (217 aa).

Zn(2+) contacts are provided by His93 and His95. Residue Tyr120 is the Proton donor of the active site.

The protein belongs to the aldolase class II family. AraD/FucA subfamily. The cofactor is Zn(2+).

It catalyses the reaction 3-dehydro-4-O-phospho-D-erythronate + H(+) = dihydroxyacetone phosphate + CO2. The enzyme catalyses 3-dehydro-4-O-phospho-L-erythronate + H(+) = dihydroxyacetone phosphate + CO2. Its function is as follows. Catalyzes the decarboxylation of 3-oxo-tetronate 4-phosphate to dihydroxyacetone phosphate (DHAP) and CO(2). This Cupriavidus necator (strain ATCC 17699 / DSM 428 / KCTC 22496 / NCIMB 10442 / H16 / Stanier 337) (Ralstonia eutropha) protein is 3-oxo-tetronate 4-phosphate decarboxylase.